Consider the following 161-residue polypeptide: Lipid droplet assembly factor 1 (161 aa).

The Cytoplasmic portion of the chain corresponds to 1 to 43; it reads MAEEEPSSVSRDLQELQRKLGLLLESFQNNSKVVAFMKSPVGR. Residues 44-61 form a helical membrane-spanning segment; sequence FLDRHPFLVLTVLMFVTM. Residues 62-67 lie on the Lumenal side of the membrane; the sequence is SAIPVG. The chain crosses the membrane as a helical span at residues 68-87; the sequence is FFLLIVVLTSLGALMGAILL. Residues 88 to 93 are Cytoplasmic-facing; that stretch reads EGLVIS. The chain crosses the membrane as a helical span at residues 94–110; the sequence is VCGLSLLCILCGLGFVS. The Lumenal portion of the chain corresponds to 111 to 116; that stretch reads LALSGI. The chain crosses the membrane as a helical span at residues 117-133; sequence TMMSYVVVSCLMSYWFS. Over 134–161 the chain is Cytoplasmic; the sequence is PSRPPTQQHANIDSQLAMKFTESEKLGL.

It belongs to the LDAF1 family. In terms of assembly, interacts with BSCL2/seipin to form an oligomeric complex.

It localises to the endoplasmic reticulum membrane. It is found in the lipid droplet. Its function is as follows. Plays an important role in the formation of lipid droplets (LD) which are storage organelles at the center of lipid and energy homeostasis. In association with BSCL2/seipin, defines the sites of LD formation in the endoplasmic reticulum. The polypeptide is Lipid droplet assembly factor 1 (Rattus norvegicus (Rat)).